Consider the following 64-residue polypeptide: Putative calcium channel toxin Tx758 (64 aa).

The first 18 residues, 1–18 (MSTFVIVFLLLTAVLCHA), serve as a signal peptide directing secretion. Positions 19-27 (EPALDETAR) are excised as a propeptide. 3 disulfides stabilise this stretch: C29–C43, C36–C49, and C42–C58.

It belongs to the scorpion calcin-like family. In terms of tissue distribution, expressed by the venom gland.

It is found in the secreted. In terms of biological role, may increase intracellular calcium release through the activation of nuclear inositol 1,4,5-trisphosphate receptors (ITPR) of cardiomyocytes, thereby causing an increase in the contraction frequency of these cells. This chain is Putative calcium channel toxin Tx758, found in Buthus israelis (Israeli scorpion).